Here is a 121-residue protein sequence, read N- to C-terminus: Small ribosomal subunit protein uS13 (121 aa).

Residues 91–121 (HRRGLPVRGQNSKNNARTRKGPRRTVANKKK) are disordered. The segment covering 106–121 (ARTRKGPRRTVANKKK) has biased composition (basic residues).

This sequence belongs to the universal ribosomal protein uS13 family. Part of the 30S ribosomal subunit. Forms a loose heterodimer with protein S19. Forms two bridges to the 50S subunit in the 70S ribosome.

Functionally, located at the top of the head of the 30S subunit, it contacts several helices of the 16S rRNA. In the 70S ribosome it contacts the 23S rRNA (bridge B1a) and protein L5 of the 50S subunit (bridge B1b), connecting the 2 subunits; these bridges are implicated in subunit movement. Contacts the tRNAs in the A and P-sites. The polypeptide is Small ribosomal subunit protein uS13 (Bacillus cereus (strain AH187)).